The following is a 148-amino-acid chain: MKKSKLLISTIISLFVLTASSVNHAQEKDFDPEVAADAVLRSAGIDPDKSVANKAPASGFWTCHGIRMHMGVDMGSWTDLDTGELYTQIETGQIDEQDKDEKIKGTDYLYALTRNPAVIKYFIVDKSGKNLYIRDDVNIFKTYKCKRN.

Residues 1-24 (MKKSKLLISTIISLFVLTASSVNH) form the signal peptide.

Its function is as follows. Probably allows the phage to grow in a different host or environment or alteration of the cell wall or membrane. The chain is D108-specific protein (ges) from Escherichia phage D108 (Bacteriophage D108).